A 120-amino-acid chain; its full sequence is PYEKIGAELVKEVAKKTDDVAGDGTTTATVLAQALVREGLRNVAAGANPLGLKRGIEKAVEKVTETLLKSAKEVETKDQIAATAAISAGDQSIGDLIAEAMDKVGNEGVITVEESNTFGL.

23-27 (DGTTT) lines the ATP pocket.

It belongs to the chaperonin (HSP60) family. Forms a cylinder of 14 subunits composed of two heptameric rings stacked back-to-back. Interacts with the co-chaperonin GroES.

Its subcellular location is the cytoplasm. It carries out the reaction ATP + H2O + a folded polypeptide = ADP + phosphate + an unfolded polypeptide.. Its function is as follows. Together with its co-chaperonin GroES, plays an essential role in assisting protein folding. The GroEL-GroES system forms a nano-cage that allows encapsulation of the non-native substrate proteins and provides a physical environment optimized to promote and accelerate protein folding. The sequence is that of Chaperonin GroEL from Mycobacterium intracellulare.